Consider the following 303-residue polypeptide: Probable 5-dehydro-4-deoxyglucarate dehydratase (303 aa).

The protein belongs to the DapA family.

It catalyses the reaction 5-dehydro-4-deoxy-D-glucarate + H(+) = 2,5-dioxopentanoate + CO2 + H2O. The protein operates within carbohydrate acid metabolism; D-glucarate degradation; 2,5-dioxopentanoate from D-glucarate: step 2/2. In Pseudomonas syringae pv. syringae (strain B728a), this protein is Probable 5-dehydro-4-deoxyglucarate dehydratase.